A 555-amino-acid polypeptide reads, in one-letter code: DNA ligase (555 aa).

ATP is bound at residue glutamate 247. Lysine 249 acts as the N6-AMP-lysine intermediate in catalysis. Residues arginine 254, arginine 269, glutamate 298, phenylalanine 337, arginine 411, and lysine 417 each coordinate ATP.

Belongs to the ATP-dependent DNA ligase family. The cofactor is Mg(2+).

The enzyme catalyses ATP + (deoxyribonucleotide)n-3'-hydroxyl + 5'-phospho-(deoxyribonucleotide)m = (deoxyribonucleotide)n+m + AMP + diphosphate.. Its function is as follows. DNA ligase that seals nicks in double-stranded DNA during DNA replication, DNA recombination and DNA repair. The chain is DNA ligase from Archaeoglobus fulgidus (strain ATCC 49558 / DSM 4304 / JCM 9628 / NBRC 100126 / VC-16).